Consider the following 242-residue polypeptide: MTTVSMRDMLQAGVHFGHQTRYWNPKMKPFIFGARNGVHIINLEHTVPMFNEALAFISNVASKKGKVLFVGTKRAASEAIKESAISCDQYYVDHRWLGGMLTNWKTVRQSIKRLKDLESQSVDGTFDKLTKKEALMRTRELEKLEKSLGGIKNMGGLPDVIFVIGADHEHIAIKEANNLGIPVVAVVDTNSSPDGINYIVPGNDDAMRSIRLYTESVAAAAKAGRGQDLAVQAEQDGFVEAE.

This sequence belongs to the universal ribosomal protein uS2 family.

The chain is Small ribosomal subunit protein uS2 from Shewanella woodyi (strain ATCC 51908 / MS32).